Reading from the N-terminus, the 152-residue chain is D-aminoacyl-tRNA deacylase (152 aa).

The short motif at 142–143 is the Gly-cisPro motif, important for rejection of L-amino acids element; sequence GP.

This sequence belongs to the DTD family. Homodimer.

It is found in the cytoplasm. It catalyses the reaction glycyl-tRNA(Ala) + H2O = tRNA(Ala) + glycine + H(+). The catalysed reaction is a D-aminoacyl-tRNA + H2O = a tRNA + a D-alpha-amino acid + H(+). In terms of biological role, an aminoacyl-tRNA editing enzyme that deacylates mischarged D-aminoacyl-tRNAs. Also deacylates mischarged glycyl-tRNA(Ala), protecting cells against glycine mischarging by AlaRS. Acts via tRNA-based rather than protein-based catalysis; rejects L-amino acids rather than detecting D-amino acids in the active site. By recycling D-aminoacyl-tRNA to D-amino acids and free tRNA molecules, this enzyme counteracts the toxicity associated with the formation of D-aminoacyl-tRNA entities in vivo and helps enforce protein L-homochirality. This Burkholderia mallei (strain NCTC 10247) protein is D-aminoacyl-tRNA deacylase.